Here is a 160-residue protein sequence, read N- to C-terminus: Cytochrome b6-f complex subunit 4 (160 aa).

Helical transmembrane passes span 36 to 56, 96 to 116, and 131 to 151; these read IFYMFPVVIFGTFAGVIGLAV, LGVLLMAAVPAGLITVPFIKI, and TVFLVGTVAAIWLGIGAALPI.

Belongs to the cytochrome b family. PetD subfamily. As to quaternary structure, the 4 large subunits of the cytochrome b6-f complex are cytochrome b6, subunit IV (17 kDa polypeptide, petD), cytochrome f and the Rieske protein, while the 4 small subunits are petG, petL, petM and petN. The complex functions as a dimer.

It localises to the plastid. It is found in the chloroplast thylakoid membrane. Component of the cytochrome b6-f complex, which mediates electron transfer between photosystem II (PSII) and photosystem I (PSI), cyclic electron flow around PSI, and state transitions. This is Cytochrome b6-f complex subunit 4 from Auxenochlorella protothecoides (Green microalga).